We begin with the raw amino-acid sequence, 106 residues long: ATP-dependent Clp protease adapter protein ClpS (106 aa).

This sequence belongs to the ClpS family. As to quaternary structure, binds to the N-terminal domain of the chaperone ClpA.

Its function is as follows. Involved in the modulation of the specificity of the ClpAP-mediated ATP-dependent protein degradation. The sequence is that of ATP-dependent Clp protease adapter protein ClpS from Yersinia pestis bv. Antiqua (strain Antiqua).